Here is a 1698-residue protein sequence, read N- to C-terminus: Bromodomain adjacent to zinc finger domain protein 2A (1698 aa).

Disordered regions lie at residues 240-262 (QSTP…QLPS) and 352-387 (VMQE…MTIE). Positions 377-387 (ENVSQDEMTIE) are enriched in polar residues. An MBD domain is found at 418–489 (IATPEQVCFP…EHFSFSPRMP (72 aa)). Disordered stretches follow at residues 524–550 (RGRP…PPKV) and 610–653 (EKEE…DRKL). The segment covering 528 to 540 (RNLEKAKAKEQKA) has biased composition (basic and acidic residues). A DNA-binding region (a.T hook 1) is located at residues 541–553 (KRGRGRPPKVKMI). The stretch at 579-638 (VQLCKLKKKMRRKARNQEAKLEAAKKLKEIKEKEEKKQKIQKAKNQEKAKNQEKKRTRRQ) forms a coiled coil. Positions 610–632 (EKEEKKQKIQKAKNQEKAKNQEK) are enriched in basic and acidic residues. Residues 701 to 766 (SCAFSDCLTT…LQAAMINPGL (66 aa)) form the DDT domain. 4 disordered regions span residues 884–905 (ITTT…NDEL), 1013–1063 (SFGS…PLTN), 1088–1110 (TVLT…SEAT), and 1123–1149 (TPCR…TAAT). Over residues 890–900 (SLRRRSERNAE) the composition is skewed to basic and acidic residues. 2 stretches are compositionally biased toward polar residues: residues 1023-1040 (HPRN…SCHC) and 1051-1063 (VTDQ…PLTN). Residues 1091–1108 (TPESSPPHSESTPIISSE) show a composition bias toward low complexity. Residues 1124–1149 (PCRNHNQGLSTHSSNRLSPPSPTAAT) are compositionally biased toward polar residues. A DNA-binding region (a.T hook 3) is located at residues 1204 to 1216 (EKRRGRRPSKLLK). Residues 1476-1526 (KVTCLYCRKGDNDELLLLCDSCDRGCHTYCHRPRMNEIPEGDWFCPTCISL) form a PHD-type zinc finger. The disordered stretch occupies residues 1549-1587 (FTEDSPSKPSRRREHPTASQFSPGESPASKKRRMGTRSQ). The Bromo domain occupies 1585-1689 (RSQSPDLTFC…KFYDARWEEF (105 aa)).

It belongs to the WAL family. In terms of assembly, component of the NoRC complex, at least composed of SMARCA5/SNF2H and BAZ2A/TIP5.

It localises to the nucleus. The protein localises to the nucleolus. Essential component of the NoRC (nucleolar remodeling complex) complex, a complex that mediates silencing of a fraction of rDNA by recruiting histone-modifying enzymes and DNA methyltransferases, leading to heterochromatin formation and transcriptional silencing. In the complex, it plays a central role by being recruited to rDNA and by targeting chromatin modifying enzymes such as HDAC1, leading to repress RNA polymerase I transcription. Recruited to rDNA via its interaction with TTF1 and its ability to recognize and bind histone H4 acetylated on 'Lys-16' (H4K16ac), leading to deacetylation of H4K5ac, H4K8ac, H4K12ac but not H4K16ac. Specifically binds pRNAs, 150-250 nucleotide RNAs that are complementary in sequence to the rDNA promoter; pRNA-binding is required for heterochromatin formation and rDNA silencing. The polypeptide is Bromodomain adjacent to zinc finger domain protein 2A (baz2a) (Xenopus laevis (African clawed frog)).